The sequence spans 816 residues: Oxysterol-binding protein-related protein 1D (816 aa).

In terms of domain architecture, PH spans 92–229 (GAGVAGIMYK…WVEAFQVAKD (138 aa)). The stretch at 290 to 321 (KHIILLDTLRQLETEKIELEATVVDETKEHDS) forms a coiled coil. The disordered stretch occupies residues 340–362 (SASDSEADNESQDGADVESDEDD). Acidic residues predominate over residues 344–362 (SEADNESQDGADVESDEDD). Residues 735–764 (NGEYESANAEKLRLEQLQRQARRLQEKGWK) are a coiled coil.

The protein belongs to the OSBP family. In terms of tissue distribution, expressed in roots, leaves, stems and flowers.

Its function is as follows. May be involved in the transport of sterols. The protein is Oxysterol-binding protein-related protein 1D (ORP1D) of Arabidopsis thaliana (Mouse-ear cress).